The primary structure comprises 159 residues: Phosphopantetheine adenylyltransferase (159 aa).

Thr-10 contributes to the substrate binding site. ATP contacts are provided by residues 10–11 (TF) and His-18. Residues Lys-42, Met-74, and Arg-88 each contribute to the substrate site. Residues 89-91 (GLR), Glu-99, and 124-130 (WSFISSS) each bind ATP.

The protein belongs to the bacterial CoaD family. As to quaternary structure, homohexamer. Requires Mg(2+) as cofactor.

The protein resides in the cytoplasm. It catalyses the reaction (R)-4'-phosphopantetheine + ATP + H(+) = 3'-dephospho-CoA + diphosphate. Its pathway is cofactor biosynthesis; coenzyme A biosynthesis; CoA from (R)-pantothenate: step 4/5. In terms of biological role, reversibly transfers an adenylyl group from ATP to 4'-phosphopantetheine, yielding dephospho-CoA (dPCoA) and pyrophosphate. The chain is Phosphopantetheine adenylyltransferase from Shigella dysenteriae serotype 1 (strain Sd197).